The sequence spans 610 residues: Elongation factor 4 (610 aa).

The 183-residue stretch at 11 to 193 folds into the tr-type G domain; that stretch reads EKIRNFSIIA…QIVEKVPAPT (183 aa). Residues 23–28 and 140–143 contribute to the GTP site; these read DHGKST and NKID.

It belongs to the TRAFAC class translation factor GTPase superfamily. Classic translation factor GTPase family. LepA subfamily.

It is found in the cell membrane. The enzyme catalyses GTP + H2O = GDP + phosphate + H(+). Functionally, required for accurate and efficient protein synthesis under certain stress conditions. May act as a fidelity factor of the translation reaction, by catalyzing a one-codon backward translocation of tRNAs on improperly translocated ribosomes. Back-translocation proceeds from a post-translocation (POST) complex to a pre-translocation (PRE) complex, thus giving elongation factor G a second chance to translocate the tRNAs correctly. Binds to ribosomes in a GTP-dependent manner. The sequence is that of Elongation factor 4 from Streptococcus pyogenes serotype M12 (strain MGAS9429).